Here is a 122-residue protein sequence, read N- to C-terminus: MALRNAILRHLRVPVQTLGLNQSKIGFLGTIRSFSSHDDHLSREAVVDRVLDVVKSFPKVDPSKVTPEVHFQNDLGLDSLDTVEIVMAIEEEFKLEIPDKEADKIDSCSLAIEYVYNHPMSS.

Residues 1–34 constitute a mitochondrion transit peptide; sequence MALRNAILRHLRVPVQTLGLNQSKIGFLGTIRSF. Positions 44–119 constitute a Carrier domain; sequence EAVVDRVLDV…LAIEYVYNHP (76 aa). Ser-79 is modified (O-(pantetheine 4'-phosphoryl)serine).

This sequence belongs to the acyl carrier protein (ACP) family. As to quaternary structure, complex I is composed of at least 49 different subunits. 4'-phosphopantetheine is transferred from CoA to a specific serine of the apo-ACP-like protein.

It localises to the mitochondrion. Its pathway is lipid metabolism; fatty acid biosynthesis. In terms of biological role, carrier of the growing fatty acid chain in fatty acid biosynthesis. May be involved in the synthesis of short and medium chain fatty acids. Accessory and non-catalytic subunit of the mitochondrial membrane respiratory chain NADH dehydrogenase (Complex I), which functions in the transfer of electrons from NADH to the respiratory chain. The polypeptide is Acyl carrier protein 1, mitochondrial (MTACP1) (Arabidopsis thaliana (Mouse-ear cress)).